The following is a 139-amino-acid chain: Small ribosomal subunit protein uS11 (139 aa).

Belongs to the universal ribosomal protein uS11 family. In terms of assembly, part of the 30S ribosomal subunit.

Functionally, located on the platform of the 30S subunit. In Pyrobaculum islandicum (strain DSM 4184 / JCM 9189 / GEO3), this protein is Small ribosomal subunit protein uS11.